Consider the following 298-residue polypeptide: ATP synthase gamma chain (298 aa).

This sequence belongs to the ATPase gamma chain family. In terms of assembly, F-type ATPases have 2 components, CF(1) - the catalytic core - and CF(0) - the membrane proton channel. CF(1) has five subunits: alpha(3), beta(3), gamma(1), delta(1), epsilon(1). CF(0) has three main subunits: a, b and c.

It localises to the cell inner membrane. Functionally, produces ATP from ADP in the presence of a proton gradient across the membrane. The gamma chain is believed to be important in regulating ATPase activity and the flow of protons through the CF(0) complex. The sequence is that of ATP synthase gamma chain from Desulforapulum autotrophicum (strain ATCC 43914 / DSM 3382 / VKM B-1955 / HRM2) (Desulfobacterium autotrophicum).